We begin with the raw amino-acid sequence, 327 residues long: Porphobilinogen deaminase (327 aa).

Residue C250 is modified to S-(dipyrrolylmethanemethyl)cysteine.

It belongs to the HMBS family. Monomer. It depends on dipyrromethane as a cofactor.

It catalyses the reaction 4 porphobilinogen + H2O = hydroxymethylbilane + 4 NH4(+). It functions in the pathway porphyrin-containing compound metabolism; protoporphyrin-IX biosynthesis; coproporphyrinogen-III from 5-aminolevulinate: step 2/4. In terms of biological role, tetrapolymerization of the monopyrrole PBG into the hydroxymethylbilane pre-uroporphyrinogen in several discrete steps. This is Porphobilinogen deaminase from Paraburkholderia phymatum (strain DSM 17167 / CIP 108236 / LMG 21445 / STM815) (Burkholderia phymatum).